A 414-amino-acid polypeptide reads, in one-letter code: Putative competence-damage inducible protein (414 aa).

The protein belongs to the CinA family.

In Moorella thermoacetica (strain ATCC 39073 / JCM 9320), this protein is Putative competence-damage inducible protein.